The sequence spans 390 residues: Monomeric sarcosine oxidase (390 aa).

6–36 (DVIVVGAGSMGMAAGYQLAKQGVKTLLVDAF) lines the FAD pocket. Cys-316 bears the S-8alpha-FAD cysteine mark.

In terms of assembly, monomer. The cofactor is FAD.

It localises to the cytoplasm. The catalysed reaction is sarcosine + O2 + H2O = formaldehyde + glycine + H2O2. Pyrrole-2-carboxylate is a competitive inhibitor. N-(cyclopropyl)glycine (CPG) is a mechanism-based inhibitor and inactivates the enzyme by covalently modifying the flavin. Catalyzes the oxidative demethylation of sarcosine. Can also oxidize other secondary amino acids such as N-methyl-L-alanine. This is Monomeric sarcosine oxidase (soxA) from Bacillus sp. (strain B-0618).